The sequence spans 312 residues: Malate dehydrogenase (312 aa).

NAD(+)-binding positions include glycine 12–glycine 17 and aspartate 36. Residues arginine 87 and arginine 93 each contribute to the substrate site. Residues asparagine 100 and leucine 123–asparagine 125 contribute to the NAD(+) site. Asparagine 125 contacts substrate. Serine 149 bears the Phosphoserine mark. Arginine 156 serves as a coordination point for substrate. Residue histidine 180 is the Proton acceptor of the active site.

It belongs to the LDH/MDH superfamily. MDH type 3 family.

The enzyme catalyses (S)-malate + NAD(+) = oxaloacetate + NADH + H(+). In terms of biological role, catalyzes the reversible oxidation of malate to oxaloacetate. The sequence is that of Malate dehydrogenase from Geobacillus thermodenitrificans (strain NG80-2).